Consider the following 309-residue polypeptide: Zinc-finger homeodomain protein 5 (309 aa).

Positions 1–16 (MDMRSHEMIERRREDN) are enriched in basic and acidic residues. Residues 1 to 21 (MDMRSHEMIERRREDNGNNNG) form a disordered region. The ZF-HD dimerization-type; degenerate zinc-finger motif lies at 76–125 (YRECLKNHAASVGGSVHDGCGEFMPSGEEGTIEALRCAACDCHRNFHRKE). Positions 240-303 (KKRFRTKFTT…NNKNNAKKPP (64 aa)) form a DNA-binding region, homeobox.

In terms of assembly, homo- and heterodimer with other ZFHD proteins. Interacts with MIF1, MIF2 and MIF3; these interactions prevent nuclear localization and DNA-binding to inhibit transcription regulation activity. Binds to ZHD1, ZHD2, ZHD4, ZHD10 and ZHD11. As to expression, mostly expressed in flowers and inflorescence.

The protein localises to the nucleus. Functionally, putative transcription factor. Binds DNA at 5'-ATTA-3' consensus promoter regions. Regulates floral architecture and leaf development. Regulators in the abscisic acid (ABA) signal pathway that confers sensitivity to ABA in an ARF2-dependent manner. The protein is Zinc-finger homeodomain protein 5 (ZHD5) of Arabidopsis thaliana (Mouse-ear cress).